The following is a 374-amino-acid chain: Putative serine/threonine-protein kinase ZK507.3 (374 aa).

Positions 25–296 (WKVIVELGKG…CKLTLKEPLV (272 aa)) constitute a Protein kinase domain. ATP is bound by residues 31-39 (LGKGGYGTV) and Lys60. Asp158 acts as the Proton acceptor in catalysis. The tract at residues 302–374 (NDNESGSTPT…KTRNKKPSRK (73 aa)) is disordered. Positions 306 to 324 (SGSTPTTSATACSPSSSTG) are enriched in low complexity. Residues 334-343 (IASNIDQKSI) show a composition bias toward polar residues. The span at 364 to 374 (TKTRNKKPSRK) shows a compositional bias: basic residues.

It belongs to the protein kinase superfamily. Ser/Thr protein kinase family.

It catalyses the reaction L-seryl-[protein] + ATP = O-phospho-L-seryl-[protein] + ADP + H(+). The catalysed reaction is L-threonyl-[protein] + ATP = O-phospho-L-threonyl-[protein] + ADP + H(+). The chain is Putative serine/threonine-protein kinase ZK507.3 from Caenorhabditis elegans.